The primary structure comprises 807 residues: Shutoff protein (807 aa).

A disordered region spans residues 1-88 (MESVEKKDSL…QVGRGDERHG (88 aa)). A compositionally biased stretch (polar residues) spans 16-29 (FATTASTDAANAPT). 2 stretches are compositionally biased toward basic and acidic residues: residues 59–70 (RSVPTEDKKQDQ) and 79–88 (QVGRGDERHG). A binding to host EIF4G region spans residues 280–345 (VMSELIVRRA…AVLVTVELEC (66 aa)). One can recognise an RRM domain in the interval 348–466 (RFFADPEMQR…DLWTAFNERS (119 aa)). Tyr365 and Tyr682 each carry phosphotyrosine; by host. The interval 684-807 (DPQSGEELNP…AGTARSPTQP (124 aa)) is disordered. Residues 726-743 (GRGGILGQSGRGGFGRGG) are compositionally biased toward gly residues. A compositionally biased stretch (basic and acidic residues) spans 744 to 755 (GGHDGRLGEPRR). A compositionally biased stretch (basic residues) spans 756-765 (GSFRGRRGVR).

The protein belongs to the adenoviridae shutoff protein family. Monomer. Interacts with hexon protein; this interaction allows chaperoning and trimerization of hexon proteins. Interacts (via N-terminus) with host initiation factor EIF4G (via C-terminus). Interacts (via RRM domain) with viral mRNAs that contain the tripartite leader; this interaction allows ribosome shunting and expression of viral late mRNAs. In terms of processing, might be cleaved by the viral protease. Phosphorylated. Tyrosine phosphorylation enhances preferential binding to tripartite leader mRNAs and allows ribosome shunting. Post-translationally, methylated. Asymmetric dimethylation by host PRMT1 of the Arg/Gly-rich region may regulate shutoff protein binding to hexon and promote the capsid assembly in the nucleus.

Its subcellular location is the host cytoplasm. In terms of biological role, protein that inhibits host translation while promoting late viral translation by ribosome shunting. Blocks host cap-dependent translation by binding to eIF4G, displacing MKNK1 from cap initiation complexes and preventing EIF4E phosphorylation. Binds to the tripartite leader sequence of viral late mRNAs and recruits host eIF4G, PABPC1/poly-A binding protein and 40S ribosomes subunits on viral mRNAs, allowing ribosome shunting and efficient translation of late viral mRNAs even though conventional translation via ribosome scanning from the cap has been shut off in the host cell. During assembly, acts as a chaperone protein that helps hexon proteins assembly into trimers. This chain is Shutoff protein, found in Homo sapiens (Human).